Consider the following 148-residue polypeptide: Ribonuclease H (148 aa).

One can recognise an RNase H type-1 domain in the interval 1-143; sequence MNQVVIYTDG…ADMLANKGVE (143 aa). The Mg(2+) site is built by D9, E47, D69, and D135.

This sequence belongs to the RNase H family. Monomer. The cofactor is Mg(2+).

The protein localises to the cytoplasm. The enzyme catalyses Endonucleolytic cleavage to 5'-phosphomonoester.. Its function is as follows. Endonuclease that specifically degrades the RNA of RNA-DNA hybrids. In Acidovorax sp. (strain JS42), this protein is Ribonuclease H.